A 150-amino-acid chain; its full sequence is Cytochrome c oxidase subunit 5A, mitochondrial (150 aa).

The N-terminal 41 residues, 1 to 41 (MLGAALRRCAVAATSRAGPRGLLHSAPNPGPAAAIQSVRCY), are a transit peptide targeting the mitochondrion. The short motif at 2–17 (LGAALRRCAVAATSRA) is the SIFI-degron element. 2 positions are modified to N6-acetyllysine: Lys87 and Lys113. A Phosphothreonine modification is found at Thr141.

Belongs to the cytochrome c oxidase subunit 5A family. Component of the cytochrome c oxidase (complex IV, CIV), a multisubunit enzyme composed of 14 subunits. The complex is composed of a catalytic core of 3 subunits MT-CO1, MT-CO2 and MT-CO3, encoded in the mitochondrial DNA, and 11 supernumerary subunits COX4I, COX5A, COX5B, COX6A, COX6B, COX6C, COX7A, COX7B, COX7C, COX8 and NDUFA4, which are encoded in the nuclear genome. The complex exists as a monomer or a dimer and forms supercomplexes (SCs) in the inner mitochondrial membrane with NADH-ubiquinone oxidoreductase (complex I, CI) and ubiquinol-cytochrome c oxidoreductase (cytochrome b-c1 complex, complex III, CIII), resulting in different assemblies (supercomplex SCI(1)III(2)IV(1) and megacomplex MCI(2)III(2)IV(2)). Interacts with AFG1L. Interacts with RAB5IF. In response to mitochondrial stress, the precursor protein is ubiquitinated by the SIFI complex in the cytoplasm before mitochondrial import, leading to its degradation. Within the SIFI complex, UBR4 initiates ubiquitin chain that are further elongated or branched by KCMF1.

It localises to the mitochondrion inner membrane. It participates in energy metabolism; oxidative phosphorylation. Functionally, component of the cytochrome c oxidase, the last enzyme in the mitochondrial electron transport chain which drives oxidative phosphorylation. The respiratory chain contains 3 multisubunit complexes succinate dehydrogenase (complex II, CII), ubiquinol-cytochrome c oxidoreductase (cytochrome b-c1 complex, complex III, CIII) and cytochrome c oxidase (complex IV, CIV), that cooperate to transfer electrons derived from NADH and succinate to molecular oxygen, creating an electrochemical gradient over the inner membrane that drives transmembrane transport and the ATP synthase. Cytochrome c oxidase is the component of the respiratory chain that catalyzes the reduction of oxygen to water. Electrons originating from reduced cytochrome c in the intermembrane space (IMS) are transferred via the dinuclear copper A center (CU(A)) of subunit 2 and heme A of subunit 1 to the active site in subunit 1, a binuclear center (BNC) formed by heme A3 and copper B (CU(B)). The BNC reduces molecular oxygen to 2 water molecules using 4 electrons from cytochrome c in the IMS and 4 protons from the mitochondrial matrix. The polypeptide is Cytochrome c oxidase subunit 5A, mitochondrial (COX5A) (Saguinus labiatus (Red-chested mustached tamarin)).